A 396-amino-acid polypeptide reads, in one-letter code: Probable splicing factor YJU2B (396 aa).

The disordered stretch occupies residues 1 to 26; sequence MGERKGVNKYYPPDFNPEKHGSLNRY. S40 is modified (phosphoserine). A coiled-coil region spans residues 182 to 214; that stretch reads LNSMLRRRFREKKKAIQEEEERDQALQAKASLT. The disordered stretch occupies residues 295-396; it reads IVRRRSRDVP…VADYSDSESE (102 aa). A Phosphoserine modification is found at S306. Residues 315 to 327 show a composition bias toward basic and acidic residues; that stretch reads KSGEPRVPEEAAQ. The span at 340–350 shows a compositional bias: polar residues; that stretch reads TTETPKCSSPR. S362 carries the post-translational modification Phosphoserine.

It belongs to the CWC16 family.

It localises to the nucleus. In terms of biological role, may be involved in mRNA splicing. The chain is Probable splicing factor YJU2B from Homo sapiens (Human).